A 248-amino-acid polypeptide reads, in one-letter code: 5'-nucleotidase SurE (248 aa).

Residues aspartate 8, aspartate 9, serine 39, and asparagine 91 each coordinate a divalent metal cation.

The protein belongs to the SurE nucleotidase family. A divalent metal cation serves as cofactor.

It localises to the cytoplasm. The enzyme catalyses a ribonucleoside 5'-phosphate + H2O = a ribonucleoside + phosphate. In terms of biological role, nucleotidase that shows phosphatase activity on nucleoside 5'-monophosphates. This chain is 5'-nucleotidase SurE, found in Shewanella amazonensis (strain ATCC BAA-1098 / SB2B).